The sequence spans 209 residues: MKWIIQEEKEEDHLQILNKDSEIGIDEVGRGSVFGPVFSVAVVLSKKSGLTLKKLGVNDSKKLTPKKRKDFFPKIIALSSDYALGQSSVREIDLLGIRHATELSMIRAVKKLKHMPSELLIDGPLTLRLWEGNQRNIISGDSKFISIATASIIAKVMRDSLMERLESKYPGYFIFKNKGYGTKQHFSSLKKHGLTNLHRKSFLNKLNLI.

The RNase H type-2 domain maps to aspartate 20–isoleucine 209. A divalent metal cation-binding residues include aspartate 26, glutamate 27, and aspartate 122.

This sequence belongs to the RNase HII family. It depends on Mn(2+) as a cofactor. Mg(2+) serves as cofactor.

Its subcellular location is the cytoplasm. The enzyme catalyses Endonucleolytic cleavage to 5'-phosphomonoester.. Functionally, endonuclease that specifically degrades the RNA of RNA-DNA hybrids. This chain is Ribonuclease HII, found in Prochlorococcus marinus subsp. pastoris (strain CCMP1986 / NIES-2087 / MED4).